A 396-amino-acid polypeptide reads, in one-letter code: S-adenosylmethionine synthase (396 aa).

Residue H16 participates in ATP binding. Position 18 (D18) interacts with Mg(2+). E44 lines the K(+) pocket. L-methionine-binding residues include E57 and Q100. Residues 100–110 form a flexible loop region; it reads QSQDIARGVDN. Residues 162–164, D237, 243–244, A260, and K264 each bind ATP; these read DGK and RK. D237 lines the L-methionine pocket. K268 serves as a coordination point for L-methionine.

This sequence belongs to the AdoMet synthase family. In terms of assembly, homotetramer; dimer of dimers. Mg(2+) is required as a cofactor. K(+) serves as cofactor.

The protein resides in the cytoplasm. The enzyme catalyses L-methionine + ATP + H2O = S-adenosyl-L-methionine + phosphate + diphosphate. It participates in amino-acid biosynthesis; S-adenosyl-L-methionine biosynthesis; S-adenosyl-L-methionine from L-methionine: step 1/1. In terms of biological role, catalyzes the formation of S-adenosylmethionine (AdoMet) from methionine and ATP. The overall synthetic reaction is composed of two sequential steps, AdoMet formation and the subsequent tripolyphosphate hydrolysis which occurs prior to release of AdoMet from the enzyme. This is S-adenosylmethionine synthase from Myxococcus xanthus.